Reading from the N-terminus, the 294-residue chain is Ribosomal RNA small subunit methyltransferase A (294 aa).

Positions 31, 33, 58, 79, 111, and 136 each coordinate S-adenosyl-L-methionine.

This sequence belongs to the class I-like SAM-binding methyltransferase superfamily. rRNA adenine N(6)-methyltransferase family. RsmA subfamily.

The protein localises to the cytoplasm. The catalysed reaction is adenosine(1518)/adenosine(1519) in 16S rRNA + 4 S-adenosyl-L-methionine = N(6)-dimethyladenosine(1518)/N(6)-dimethyladenosine(1519) in 16S rRNA + 4 S-adenosyl-L-homocysteine + 4 H(+). Its function is as follows. Specifically dimethylates two adjacent adenosines (A1518 and A1519) in the loop of a conserved hairpin near the 3'-end of 16S rRNA in the 30S particle. May play a critical role in biogenesis of 30S subunits. This Lactobacillus helveticus (strain DPC 4571) protein is Ribosomal RNA small subunit methyltransferase A.